The sequence spans 224 residues: Pyridoxine/pyridoxamine 5'-phosphate oxidase (224 aa).

Residues 14–17 (REHY) and lysine 76 each bind substrate. FMN contacts are provided by residues 71 to 76 (RTVLMK), 86 to 87 (YT), arginine 92, lysine 93, and glutamine 115. Substrate contacts are provided by tyrosine 133, arginine 137, and serine 141. Residues 150-151 (QS) and tryptophan 196 each bind FMN. Position 202–204 (202–204 (RLH)) interacts with substrate. Arginine 206 contributes to the FMN binding site.

This sequence belongs to the pyridoxamine 5'-phosphate oxidase family. Homodimer. Requires FMN as cofactor.

It catalyses the reaction pyridoxamine 5'-phosphate + O2 + H2O = pyridoxal 5'-phosphate + H2O2 + NH4(+). The enzyme catalyses pyridoxine 5'-phosphate + O2 = pyridoxal 5'-phosphate + H2O2. The protein operates within cofactor metabolism; pyridoxal 5'-phosphate salvage; pyridoxal 5'-phosphate from pyridoxamine 5'-phosphate: step 1/1. It functions in the pathway cofactor metabolism; pyridoxal 5'-phosphate salvage; pyridoxal 5'-phosphate from pyridoxine 5'-phosphate: step 1/1. Catalyzes the oxidation of either pyridoxine 5'-phosphate (PNP) or pyridoxamine 5'-phosphate (PMP) into pyridoxal 5'-phosphate (PLP). This is Pyridoxine/pyridoxamine 5'-phosphate oxidase from Streptomyces avermitilis (strain ATCC 31267 / DSM 46492 / JCM 5070 / NBRC 14893 / NCIMB 12804 / NRRL 8165 / MA-4680).